The following is a 612-amino-acid chain: tRNA(Met) cytidine acetyltransferase TmcA (612 aa).

Residues Gln-136, 161–170 (GRGKSTLLGQ), and Arg-284 each bind ATP. The 181-residue stretch at 319–499 (KHASELEEAL…PAAIYALPLT (181 aa)) folds into the N-acetyltransferase domain. 424–426 (IAV) contacts acetyl-CoA.

The protein belongs to the RNA cytidine acetyltransferase family. TmcA subfamily.

It localises to the cytoplasm. It carries out the reaction cytidine(34) in elongator tRNA(Met) + acetyl-CoA + ATP + H2O = N(4)-acetylcytidine(34) in elongator tRNA(Met) + ADP + phosphate + CoA + H(+). In terms of biological role, catalyzes the formation of N(4)-acetylcytidine (ac(4)C) at the wobble position of tRNA(Met), by using acetyl-CoA as an acetyl donor and ATP (or GTP). The sequence is that of tRNA(Met) cytidine acetyltransferase TmcA from Idiomarina loihiensis (strain ATCC BAA-735 / DSM 15497 / L2-TR).